Reading from the N-terminus, the 156-residue chain is Small ribosomal subunit protein uS7 (156 aa).

Belongs to the universal ribosomal protein uS7 family. Part of the 30S ribosomal subunit. Contacts proteins S9 and S11.

In terms of biological role, one of the primary rRNA binding proteins, it binds directly to 16S rRNA where it nucleates assembly of the head domain of the 30S subunit. Is located at the subunit interface close to the decoding center, probably blocks exit of the E-site tRNA. This is Small ribosomal subunit protein uS7 from Natranaerobius thermophilus (strain ATCC BAA-1301 / DSM 18059 / JW/NM-WN-LF).